The chain runs to 565 residues: Mannosyl-oligosaccharide 1,2-alpha-mannosidase (565 aa).

A disulfide bridge connects residues Cys320 and Cys363. The Proton donor role is filled by Glu378. Thr501 is a Ca(2+) binding site. Basic and acidic residues-rich tracts occupy residues Asn526–Asp538 and Lys550–Gly565. The tract at residues Asn526–Gly565 is disordered.

It belongs to the glycosyl hydrolase 47 family. Requires Ca(2+) as cofactor.

The catalysed reaction is N(4)-(alpha-D-Man-(1-&gt;2)-alpha-D-Man-(1-&gt;2)-alpha-D-Man-(1-&gt;3)-[alpha-D-Man-(1-&gt;2)-alpha-D-Man-(1-&gt;3)-[alpha-D-Man-(1-&gt;2)-alpha-D-Man-(1-&gt;6)]-alpha-D-Man-(1-&gt;6)]-beta-D-Man-(1-&gt;4)-beta-D-GlcNAc-(1-&gt;4)-beta-D-GlcNAc)-L-asparaginyl-[protein] (N-glucan mannose isomer 9A1,2,3B1,2,3) + 4 H2O = N(4)-(alpha-D-Man-(1-&gt;3)-[alpha-D-Man-(1-&gt;3)-[alpha-D-Man-(1-&gt;6)]-alpha-D-Man-(1-&gt;6)]-beta-D-Man-(1-&gt;4)-beta-D-GlcNAc-(1-&gt;4)-beta-D-GlcNAc)-L-asparaginyl-[protein] (N-glucan mannose isomer 5A1,2) + 4 beta-D-mannose. It carries out the reaction N(4)-(alpha-D-Man-(1-&gt;2)-alpha-D-Man-(1-&gt;2)-alpha-D-Man-(1-&gt;3)-[alpha-D-Man-(1-&gt;3)-[alpha-D-Man-(1-&gt;2)-alpha-D-Man-(1-&gt;6)]-alpha-D-Man-(1-&gt;6)]-beta-D-Man-(1-&gt;4)-beta-D-GlcNAc-(1-&gt;4)-beta-D-GlcNAc)-L-asparaginyl-[protein] (N-glucan mannose isomer 8A1,2,3B1,3) + 3 H2O = N(4)-(alpha-D-Man-(1-&gt;3)-[alpha-D-Man-(1-&gt;3)-[alpha-D-Man-(1-&gt;6)]-alpha-D-Man-(1-&gt;6)]-beta-D-Man-(1-&gt;4)-beta-D-GlcNAc-(1-&gt;4)-beta-D-GlcNAc)-L-asparaginyl-[protein] (N-glucan mannose isomer 5A1,2) + 3 beta-D-mannose. Its pathway is protein modification; protein glycosylation. Its function is as follows. Involved in the maturation of Asn-linked oligosaccharides. Trim a single alpha-1,2-linked mannose residue from Man(9)GlcNAc(2) to produce Man(8)GlcNAc(2). The polypeptide is Mannosyl-oligosaccharide 1,2-alpha-mannosidase (MNS1) (Candida albicans (Yeast)).